The primary structure comprises 124 residues: Histone H2A, embryonic (124 aa).

The segment covering 1–18 (MSGRGKSGKARTKAKTRS) has biased composition (basic residues). Residues 1 to 21 (MSGRGKSGKARTKAKTRSSRA) form a disordered region. Ser-2 carries the N-acetylserine modification. Ser-2 carries the post-translational modification Phosphoserine. At Gln-104 the chain carries N5-methylglutamine. Lys-119 is covalently cross-linked (Glycyl lysine isopeptide (Lys-Gly) (interchain with G-Cter in ubiquitin)).

The protein belongs to the histone H2A family. In terms of assembly, the nucleosome is a histone octamer containing two molecules each of H2A, H2B, H3 and H4 assembled in one H3-H4 heterotetramer and two H2A-H2B heterodimers. The octamer wraps approximately 147 bp of DNA. Monoubiquitination of Lys-119 gives a specific tag for epigenetic transcriptional repression. In terms of processing, phosphorylation of Ser-2 directly represses transcription.

The protein resides in the nucleus. Its subcellular location is the chromosome. Functionally, core component of nucleosome. Nucleosomes wrap and compact DNA into chromatin, limiting DNA accessibility to the cellular machineries which require DNA as a template. Histones thereby play a central role in transcription regulation, DNA repair, DNA replication and chromosomal stability. DNA accessibility is regulated via a complex set of post-translational modifications of histones, also called histone code, and nucleosome remodeling. The sequence is that of Histone H2A, embryonic from Psammechinus miliaris (Green sea urchin).